A 503-amino-acid chain; its full sequence is GTPase Obg (503 aa).

In terms of domain architecture, Obg spans P2–M159. The region spanning A160 to K340 is the OBG-type G domain. GTP-binding positions include G166 to S173, F191 to V195, D212 to G215, N292 to D295, and S321 to V323. Residues S173 and T193 each coordinate Mg(2+). The OCT domain maps to E371–P444. Basic and acidic residues predominate over residues R457–R476. Residues R457–G503 form a disordered region.

This sequence belongs to the TRAFAC class OBG-HflX-like GTPase superfamily. OBG GTPase family. Monomer. It depends on Mg(2+) as a cofactor.

The protein resides in the cytoplasm. An essential GTPase which binds GTP, GDP and possibly (p)ppGpp with moderate affinity, with high nucleotide exchange rates and a fairly low GTP hydrolysis rate. Plays a role in control of the cell cycle, stress response, ribosome biogenesis and in those bacteria that undergo differentiation, in morphogenesis control. The protein is GTPase Obg of Corynebacterium jeikeium (strain K411).